The following is a 739-amino-acid chain: Nucleoprotein (739 aa).

Residues 334-363 (VNVGEQYQQLREAATEAEKQLQQYAESREL) adopt a coiled-coil conformation. Disordered regions lie at residues 414–475 (RPNL…YHDD) and 498–642 (FELQ…IGQS). Residues 570 to 579 (TPIDQGDDDP) are compositionally biased toward acidic residues. The span at 614 to 624 (AEAHEPPHKSS) shows a compositional bias: basic and acidic residues. The segment covering 625–634 (NEPAETSQLN) has biased composition (polar residues).

This sequence belongs to the filoviruses nucleoprotein family. In terms of assembly, homooligomer. Homomultimerizes to form the nucleocapsid. Binds to viral genomic RNA. Interacts with VP35 and VP30 to form the nucleocapsid. Interacts with host PPP2R5C; this interaction leads to VP30 dephosphorylation and viral transcription. Interacts with VP24; this interaction facilitates nucleocapsid assembly and genome packaging. Interacts with matrix protein VP40; this interaction allows recruitment of the nucleocapsid into progeny virions. Interacts with host STAU1. Interacts with host NXF1 (via RNA-binding domain); this interaction recruits NXF1 to the inclusion bodies were viral replication takes place, probably to export viral mRNA-NXF1 complexes from these sites. Interacts with host CCDC92; this interaction sequesters NP in the host cytoplasm. Interacts with host TRIM14. Phosphorylated and O-glycosylated by host. Acetylated by host EP300 in vitro.

The protein resides in the virion. It localises to the host cytoplasm. Its function is as follows. Oligomerizes into helical capsid to encapsidate the viral genome, protecting it from nucleases and the cellular innate immune response. VP35 binds to and stabilizes monomeric NP, keeping it soluble. Upon virus replication, NP is recruited to bind cooperatively viral genomic RNA and VP35 is released. The encapsidated genomic RNA is termed the nucleocapsid and serves as template for transcription and replication. The nucleocapsid is helical with a pitch of 10.81 NP per turn and a diameter of about 22nm. Each NP binds to six nucleotides of viral genomic RNA, three being exposed to the solvant and three hidden into the nucleocapsid. Also recruits host PPP2R5C phosphatase to dephosphorylate VP30 and thereby promote viral transcription. Upon virion assembly and budding, NP binds to VP24 and possibly host STAU1. The polypeptide is Nucleoprotein (NP) (Homo sapiens (Human)).